The chain runs to 357 residues: UPF0324 membrane protein BMEI1914 (357 aa).

Helical transmembrane passes span asparagine 29–glutamate 48, alanine 58–alanine 77, serine 90–isoleucine 112, glycine 117–isoleucine 136, leucine 149–alanine 171, alanine 181–leucine 203, isoleucine 210–leucine 232, leucine 242–asparagine 261, proline 268–leucine 290, alanine 300–isoleucine 322, and leucine 334–valine 356.

The protein belongs to the UPF0324 family.

It is found in the cell membrane. The polypeptide is UPF0324 membrane protein BMEI1914 (Brucella melitensis biotype 1 (strain ATCC 23456 / CCUG 17765 / NCTC 10094 / 16M)).